We begin with the raw amino-acid sequence, 245 residues long: Probable transcriptional regulatory protein MARTH_orf271 (245 aa).

Belongs to the TACO1 family.

It localises to the cytoplasm. The chain is Probable transcriptional regulatory protein MARTH_orf271 from Metamycoplasma arthritidis (strain 158L3-1) (Mycoplasma arthritidis).